A 96-amino-acid chain; its full sequence is Small ribosomal subunit protein bS18 (96 aa).

Belongs to the bacterial ribosomal protein bS18 family. In terms of assembly, part of the 30S ribosomal subunit. Forms a tight heterodimer with protein bS6.

Functionally, binds as a heterodimer with protein bS6 to the central domain of the 16S rRNA, where it helps stabilize the platform of the 30S subunit. This is Small ribosomal subunit protein bS18 from Borreliella burgdorferi (strain ATCC 35210 / DSM 4680 / CIP 102532 / B31) (Borrelia burgdorferi).